The following is a 64-amino-acid chain: Conotoxin VnMLCL-05 (64 aa).

A signal peptide spans 1–19 (MLCLPVFIILLLLASPAAP). Positions 20–43 (NPLQTRIQSNLIRAGPEDANIKTD) are excised as a propeptide. A Lysine amide modification is found at K63.

This sequence belongs to the conotoxin T superfamily. As to expression, expressed by the venom duct.

It is found in the secreted. The sequence is that of Conotoxin VnMLCL-05 from Conus ventricosus (Mediterranean cone).